Reading from the N-terminus, the 244-residue chain is 1-(5-phosphoribosyl)-5-[(5-phosphoribosylamino)methylideneamino] imidazole-4-carboxamide isomerase (244 aa).

Residue Asp10 is the Proton acceptor of the active site. The Proton donor role is filled by Asp132.

Belongs to the HisA/HisF family.

It localises to the cytoplasm. It catalyses the reaction 1-(5-phospho-beta-D-ribosyl)-5-[(5-phospho-beta-D-ribosylamino)methylideneamino]imidazole-4-carboxamide = 5-[(5-phospho-1-deoxy-D-ribulos-1-ylimino)methylamino]-1-(5-phospho-beta-D-ribosyl)imidazole-4-carboxamide. Its pathway is amino-acid biosynthesis; L-histidine biosynthesis; L-histidine from 5-phospho-alpha-D-ribose 1-diphosphate: step 4/9. The chain is 1-(5-phosphoribosyl)-5-[(5-phosphoribosylamino)methylideneamino] imidazole-4-carboxamide isomerase from Xanthomonas campestris pv. campestris (strain 8004).